The sequence spans 439 residues: Ribosomal protein uS12 methylthiotransferase RimO (439 aa).

Positions 3-115 (NKLHIVSLGC…IDELLVEKKS (113 aa)) constitute an MTTase N-terminal domain. Residues cysteine 12, cysteine 46, cysteine 78, cysteine 146, cysteine 150, and cysteine 153 each contribute to the [4Fe-4S] cluster site. The Radical SAM core domain maps to 132–361 (TGSTYHAYIK…GKIAADVMQA (230 aa)).

The protein belongs to the methylthiotransferase family. RimO subfamily. [4Fe-4S] cluster serves as cofactor.

It is found in the cytoplasm. It carries out the reaction L-aspartate(89)-[ribosomal protein uS12]-hydrogen + (sulfur carrier)-SH + AH2 + 2 S-adenosyl-L-methionine = 3-methylsulfanyl-L-aspartate(89)-[ribosomal protein uS12]-hydrogen + (sulfur carrier)-H + 5'-deoxyadenosine + L-methionine + A + S-adenosyl-L-homocysteine + 2 H(+). Catalyzes the methylthiolation of an aspartic acid residue of ribosomal protein uS12. This Sulfurimonas denitrificans (strain ATCC 33889 / DSM 1251) (Thiomicrospira denitrificans (strain ATCC 33889 / DSM 1251)) protein is Ribosomal protein uS12 methylthiotransferase RimO.